The sequence spans 538 residues: ATP synthase subunit beta, mitochondrial (538 aa).

215 to 222 (GGAGVGKT) lines the ATP pocket.

This sequence belongs to the ATPase alpha/beta chains family. In terms of assembly, subunit of the F-type ATPase which has 2 components, CF(1) - the catalytic core - and CF(0) - the membrane proton channel. Interacts (via N-terminus) with lov-1 (via PLAT domain). Expressed in three categories of adult male sensory neurons: tail ray B neurons, HOB hook neuron and head cephalic (CEM) neurons.

The protein localises to the cell projection. The protein resides in the cilium. Its subcellular location is the mitochondrion. It is found in the mitochondrion inner membrane. The enzyme catalyses ATP + H2O + 4 H(+)(in) = ADP + phosphate + 5 H(+)(out). In terms of biological role, mitochondrial membrane ATP synthase (F(1)F(0) ATP synthase or Complex V) produces ATP from ADP in the presence of a proton gradient across the membrane which is generated by electron transport complexes of the respiratory chain. F-type ATPases consist of two structural domains, F(1) - containing the extramembraneous catalytic core, and F(0) - containing the membrane proton channel, linked together by a central stalk and a peripheral stalk. During catalysis, ATP synthesis in the catalytic domain of F(1) is coupled via a rotary mechanism of the central stalk subunits to proton translocation. Subunits alpha and beta form the catalytic core in F(1). Rotation of the central stalk against the surrounding subunits leads to hydrolysis of ATP in three separate catalytic sites on the beta subunits. Required during male mating behavior for the response to hermaphrodite contact, acting with lov-1 and pkd-2. May be involved in polycystin signaling. The polypeptide is ATP synthase subunit beta, mitochondrial (Caenorhabditis elegans).